Consider the following 233-residue polypeptide: Ribonuclease 3 (233 aa).

In terms of domain architecture, RNase III spans 6–135; it reads QDYLAKEFNI…FIGALYLDQG (130 aa). Glu-48 is a binding site for Mg(2+). The active site involves Asp-52. Residues Asp-121 and Glu-124 each coordinate Mg(2+). Glu-124 is a catalytic residue. Residues 161-230 form the DRBM domain; sequence DAKTSLQEFL…AQQALDNMRN (70 aa). A disordered region spans residues 205 to 233; it reads IGEGKGSSKKHAEMQAAQQALDNMRNKNK.

It belongs to the ribonuclease III family. In terms of assembly, homodimer. The cofactor is Mg(2+).

The protein localises to the cytoplasm. The enzyme catalyses Endonucleolytic cleavage to 5'-phosphomonoester.. In terms of biological role, digests double-stranded RNA. Involved in the processing of primary rRNA transcript to yield the immediate precursors to the large and small rRNAs (23S and 16S). Processes some mRNAs, and tRNAs when they are encoded in the rRNA operon. Processes pre-crRNA and tracrRNA of type II CRISPR loci if present in the organism. This Limosilactobacillus reuteri (strain DSM 20016) (Lactobacillus reuteri) protein is Ribonuclease 3.